The chain runs to 381 residues: Lipid-A-disaccharide synthase (381 aa).

The protein belongs to the LpxB family.

The catalysed reaction is 2-N,3-O-bis[(3R)-3-hydroxytetradecanoyl]-alpha-D-glucosaminyl 1-phosphate + UDP-2-N,3-O-bis[(3R)-3-hydroxytetradecanoyl]-alpha-D-glucosamine = lipid A disaccharide (E. coli) + UDP + H(+). The enzyme catalyses a lipid X + a UDP-2-N,3-O-bis[(3R)-3-hydroxyacyl]-alpha-D-glucosamine = a lipid A disaccharide + UDP + H(+). The protein operates within glycolipid biosynthesis; lipid IV(A) biosynthesis; lipid IV(A) from (3R)-3-hydroxytetradecanoyl-[acyl-carrier-protein] and UDP-N-acetyl-alpha-D-glucosamine: step 5/6. Functionally, condensation of UDP-2,3-diacylglucosamine and 2,3-diacylglucosamine-1-phosphate to form lipid A disaccharide, a precursor of lipid A, a phosphorylated glycolipid that anchors the lipopolysaccharide to the outer membrane of the cell. This Erwinia tasmaniensis (strain DSM 17950 / CFBP 7177 / CIP 109463 / NCPPB 4357 / Et1/99) protein is Lipid-A-disaccharide synthase.